We begin with the raw amino-acid sequence, 126 residues long: Large-conductance mechanosensitive channel (126 aa).

2 helical membrane-spanning segments follow: residues 14-34 (VIDL…VKSL) and 67-87 (GSFL…FILV).

It belongs to the MscL family. In terms of assembly, homopentamer.

It is found in the cell membrane. Channel that opens in response to stretch forces in the membrane lipid bilayer. May participate in the regulation of osmotic pressure changes within the cell. The chain is Large-conductance mechanosensitive channel from Lactiplantibacillus plantarum (strain ATCC BAA-793 / NCIMB 8826 / WCFS1) (Lactobacillus plantarum).